Here is a 1778-residue protein sequence, read N- to C-terminus: Internalin I (1778 aa).

A signal peptide spans 1 to 28 (MKKKFSIVIISVLLLGYLAPFDTLLVGA). The disordered stretch occupies residues 36–101 (DTAVKTAEAD…NIKTEINTDK (66 aa)). Residues 51 to 62 (IESETGSDDETA) are compositionally biased toward acidic residues. Residues 63–88 (EEPKEAKEAEASKETTEKEEKAKTEE) show a composition bias toward basic and acidic residues. LRR repeat units follow at residues 155 to 179 (AISQ…EGLQ), 183 to 204 (NLTS…KDLV), 205 to 227 (NLVS…EDLV), 228 to 250 (NLQE…ASLP), 251 to 272 (VLKE…NPAG), 277 to 298 (ELET…AKLP), 299 to 321 (KLKN…NGAT), 322 to 344 (KLQL…SGLS), 345 to 367 (ELEM…KNLP), 368 to 389 (NLVN…NNLP), 390 to 412 (KLQT…TDLP), 413 to 434 (QLKT…DNLP), 435 to 456 (KLEK…TDLP), 457 to 478 (RLSY…KKLP), 479 to 500 (LLEW…TNFP), 501 to 522 (SLNY…TELP), 523 to 544 (SLKE…HDMP), 545 to 566 (NLRK…DNLP), 567 to 588 (KLQS…HDLP), 589 to 610 (SLET…DNLP), 611 to 632 (DLTY…GDLP), 633 to 653 (NLET…GTMD), 657 to 678 (KLRI…GNLS), 685 to 707 (NLTE…STLS), 708 to 729 (RLIY…SNLT), 730 to 751 (NLQE…SDLE), and 752 to 773 (NLNK…ANMV). The region spanning 785-872 (TYTLPTVLSY…SAAKVTADAE (88 aa)) is the LRRCT domain. MucBP domains lie at 1510-1569 (DAAA…EQTV), 1575-1634 (AIKP…PQTI), and 1644-1705 (SKKS…SQTV). The tract at residues 1716 to 1742 (SKDDPKVKGKTNQPSSTDTKLKVDNNS) is disordered. The segment covering 1725 to 1742 (KTNQPSSTDTKLKVDNNS) has biased composition (polar residues). The LPXTG sorting signal motif lies at 1743-1747 (LPATG). Pentaglycyl murein peptidoglycan amidated threonine is present on Thr1746. Positions 1747 to 1778 (GDTENMILAVLIGFNMLIVASIFLFRKPKTNQ) are cleaved as a propeptide — removed by sortase.

This sequence belongs to the internalin family.

The protein resides in the secreted. Its subcellular location is the cell wall. Functionally, a role in virulence could not be demonstrated. This Listeria monocytogenes serovar 1/2a (strain ATCC BAA-679 / EGD-e) protein is Internalin I (inlI).